Here is a 521-residue protein sequence, read N- to C-terminus: Ribonuclease Y (521 aa).

A helical membrane pass occupies residues 5–25 (LLLILTAVIMLIVGFAVGAIL). Positions 77–107 (ELKDRRGEVQKQENRLIQREETMDRKDATLD) are disordered. One can recognise a KH domain in the interval 211–271 (TVTVVTLPND…IRREIARMTL (61 aa)). The 94-residue stretch at 337-430 (VLNHSIEVAK…VAASDAISAA (94 aa)) folds into the HD domain.

Belongs to the RNase Y family.

It is found in the cell membrane. Its function is as follows. Endoribonuclease that initiates mRNA decay. This chain is Ribonuclease Y, found in Latilactobacillus sakei subsp. sakei (strain 23K) (Lactobacillus sakei subsp. sakei).